We begin with the raw amino-acid sequence, 587 residues long: Putative adenylate cyclase 3 (587 aa).

Positions A12–E127 constitute a Guanylate cyclase domain. 5 TPR repeats span residues L343 to M376, P421 to S454, A455 to F488, L490 to S522, and M524 to F556.

This sequence belongs to the adenylyl cyclase class-3 family.

The catalysed reaction is ATP = 3',5'-cyclic AMP + diphosphate. This Rhizobium meliloti (strain 1021) (Ensifer meliloti) protein is Putative adenylate cyclase 3 (cya3).